The following is a 365-amino-acid chain: Chorismate synthase (365 aa).

Arginine 46 is a binding site for NADP(+). FMN is bound by residues 124–126 (RAS), glycine 284, 299–303 (KPTPS), and arginine 326.

The protein belongs to the chorismate synthase family. FMNH2 is required as a cofactor.

It carries out the reaction 5-O-(1-carboxyvinyl)-3-phosphoshikimate = chorismate + phosphate. It functions in the pathway metabolic intermediate biosynthesis; chorismate biosynthesis; chorismate from D-erythrose 4-phosphate and phosphoenolpyruvate: step 7/7. Catalyzes the anti-1,4-elimination of the C-3 phosphate and the C-6 proR hydrogen from 5-enolpyruvylshikimate-3-phosphate (EPSP) to yield chorismate, which is the branch point compound that serves as the starting substrate for the three terminal pathways of aromatic amino acid biosynthesis. This reaction introduces a second double bond into the aromatic ring system. The sequence is that of Chorismate synthase from Pyrobaculum neutrophilum (strain DSM 2338 / JCM 9278 / NBRC 100436 / V24Sta) (Thermoproteus neutrophilus).